A 431-amino-acid chain; its full sequence is MAEPFSTILGTDGSGGRCKYLNKGIVGLGSYGEAYVAESVEDGSLCVAKVMDLSKMSQRDKRYAQSEIKCLANCNHPNIIRYIEDHEENDRLLIVMEFADSGNLDEQIKLRGSGDARYFQEHEALFLFLQLCLALDYIHSHKMLHRDIKSANVLLTSTGLVKLGDFGFSHQYEDTVSGVVASTFCGTPYYLAPELWNNKRYNKKADVWSLGVLLYEIMGMKKPFSASNLKGLMSKVLAGTYAPLPDSFSSEFKRVVDGILVADPNDRPSVREIFQIPYINKGLKLFVQALKKNERISDSVKEVLVTQVSEILSSEVSPDAHRFLVSQINYDVTHRGHVNKLGGGNGKSWKPRFLQIVRGQLILTDDEEGNNPKGLNLEQVQGACPVPHSTAKRDFVFALNTVGGKGMWFQAVSHGDMEMWVHAIQRGIGVA.

A Protein kinase domain is found at 20-279 (YLNKGIVGLG…VREIFQIPYI (260 aa)). ATP contacts are provided by residues 26 to 34 (VGLGSYGEA) and K49. The active-site Proton acceptor is the D147. A PH domain is found at 331-429 (DVTHRGHVNK…WVHAIQRGIG (99 aa)).

It belongs to the protein kinase superfamily. Ser/Thr protein kinase family.

The catalysed reaction is L-seryl-[protein] + ATP = O-phospho-L-seryl-[protein] + ADP + H(+). It catalyses the reaction L-threonyl-[protein] + ATP = O-phospho-L-threonyl-[protein] + ADP + H(+). The polypeptide is Putative serine/threonine-protein kinase A (NRKA) (Trypanosoma brucei brucei).